Reading from the N-terminus, the 272-residue chain is Shikimate dehydrogenase (NADP(+)) (272 aa).

Residues 14–16 (SKS) and Thr-61 each bind shikimate. Lys-65 (proton acceptor) is an active-site residue. NADP(+) is bound at residue Glu-77. Residues Asn-86 and Asp-102 each coordinate shikimate. Residues 126 to 130 (GAGGA), 149 to 154 (NRTVSR), and Met-213 contribute to the NADP(+) site. Tyr-215 provides a ligand contact to shikimate. Gly-237 is an NADP(+) binding site.

Belongs to the shikimate dehydrogenase family. Homodimer.

The enzyme catalyses shikimate + NADP(+) = 3-dehydroshikimate + NADPH + H(+). It participates in metabolic intermediate biosynthesis; chorismate biosynthesis; chorismate from D-erythrose 4-phosphate and phosphoenolpyruvate: step 4/7. In terms of biological role, involved in the biosynthesis of the chorismate, which leads to the biosynthesis of aromatic amino acids. Catalyzes the reversible NADPH linked reduction of 3-dehydroshikimate (DHSA) to yield shikimate (SA). This is Shikimate dehydrogenase (NADP(+)) from Escherichia coli O7:K1 (strain IAI39 / ExPEC).